A 425-amino-acid chain; its full sequence is Isocitrate dehydrogenase [NADP] (425 aa).

An NADP(+)-binding site is contributed by threonine 114. Serine 123, asparagine 125, arginine 129, arginine 139, and arginine 162 together coordinate D-threo-isocitrate. Aspartate 316 serves as a coordination point for Mg(2+). NADP(+)-binding positions include 348-354 (HGTAPKY), asparagine 361, tyrosine 400, and arginine 404.

This sequence belongs to the isocitrate and isopropylmalate dehydrogenases family. Homodimer. Mg(2+) is required as a cofactor. It depends on Mn(2+) as a cofactor.

It carries out the reaction D-threo-isocitrate + NADP(+) = 2-oxoglutarate + CO2 + NADPH. Catalyzes the oxidative decarboxylation of isocitrate to 2-oxoglutarate and carbon dioxide with the concomitant reduction of NADP(+). The protein is Isocitrate dehydrogenase [NADP] (icd) of Helicobacter pylori (strain ATCC 700392 / 26695) (Campylobacter pylori).